The sequence spans 96 residues: Non-specific lipid-transfer protein 2 (96 aa).

Residues 1 to 27 form the signal peptide; the sequence is MMRRLAVLVLAVAMVAACGGGVVGVAG. 4 disulfide bridges follow: Cys-30–Cys-62, Cys-38–Cys-52, Cys-53–Cys-88, and Cys-64–Cys-95.

Belongs to the plant LTP family. B11E subfamily.

Its function is as follows. Transfer lipids across membranes. May play a role in plant defense or in the biosynthesis of cuticle layers. This Oryza sativa subsp. indica (Rice) protein is Non-specific lipid-transfer protein 2 (LTP-2).